A 95-amino-acid polypeptide reads, in one-letter code: Acyl carrier protein AcpXL (95 aa).

Positions 4–90 constitute a Carrier domain; it reads TATFDKVADI…NLCAKIDELR (87 aa). Ser39 carries the O-(pantetheine 4'-phosphoryl)serine modification.

In terms of processing, 4'-phosphopantetheine is transferred from CoA to a specific serine of apo-ACP by AcpS. This modification is essential for activity because fatty acids are bound in thioester linkage to the sulfhydryl of the prosthetic group.

It is found in the cytoplasm. The protein operates within glycolipid biosynthesis; KDO(2)-lipid A biosynthesis. Carrier of the growing fatty acid chain in fatty acid biosynthesis. Is involved in the transfer of long hydroxylated fatty acids to lipid A. This chain is Acyl carrier protein AcpXL (acpXL), found in Rhizobium meliloti (strain 1021) (Ensifer meliloti).